The chain runs to 104 residues: uncharacterized protein (104 aa).

This is an uncharacterized protein from Escherichia coli (strain K12).